A 362-amino-acid polypeptide reads, in one-letter code: ATPase ARSA2 (362 aa).

ATP is bound at residue 27–34; it reads KGGVGKTT. Asp-58 is an active-site residue. The ATP site is built by Glu-235 and Asn-262.

Belongs to the arsA ATPase family. Homodimer. Interacts with SEC61B.

The protein localises to the cytoplasm. It is found in the cytosol. The protein resides in the endoplasmic reticulum. ATPase required for the post-translational delivery of tail-anchored (TA) proteins to the endoplasmic reticulum. Recognizes and selectively binds the transmembrane domain of TA proteins in the cytosol. This complex then targets to the endoplasmic reticulum by membrane-bound receptors, where the tail-anchored protein is released for insertion. This process is regulated by ATP binding and hydrolysis. ATP binding drives the homodimer towards the closed dimer state, facilitating recognition of newly synthesized TA membrane proteins. ATP hydrolysis is required for insertion. Subsequently, the homodimer reverts towards the open dimer state, lowering its affinity for the membrane-bound receptor, and returning it to the cytosol to initiate a new round of targeting. This is ATPase ARSA2 from Chlamydomonas reinhardtii (Chlamydomonas smithii).